The chain runs to 64 residues: Potassium channel toxin alpha-KTx J123 (64 aa).

Residues 1-21 (MNKVYLVAVLVLFLALTINES) form the signal peptide. 3 disulfide bridges follow: C30–C52, C37–C60, and C41–C62.

This sequence belongs to the short scorpion toxin superfamily. Potassium channel inhibitor family. Alpha-KTx 11 subfamily. Expressed by the venom gland.

Its subcellular location is the secreted. This recombinant toxin inhibits mammalian voltage-gated potassium channels Kv1.3/KCNA3 (IC(50)=0.79 nM) and Kv1.2/KCNA2 (IC(50)=26.4 nM). This chain is Potassium channel toxin alpha-KTx J123, found in Olivierus martensii (Manchurian scorpion).